A 134-amino-acid chain; its full sequence is TSC22 domain family protein 3 (134 aa).

The interval 1 to 60 is AP1-binding; the sequence is MNTEMYQTPMEVAVYQLHNFSISFFSSLLGGDVVSVKLDNSASGASVVALDNKIEQAMDL. A leucine-zipper region spans residues 76-97; sequence LKEQIRELVEKNSQLERENTLL. The segment at 101–134 is disordered; the sequence is ASPEQLEKFQSRLSPEEPAPEAPETPEAPGGSAV. Ser-102 carries the phosphoserine modification. At Thr-125 the chain carries Phosphothreonine. Low complexity predominate over residues 125–134; the sequence is TPEAPGGSAV.

This sequence belongs to the TSC-22/Dip/Bun family. Can form homodimers, however it is likely to function as a monomer. Interacts with NFKB1. Interacts (via N-terminus) with JUN and FOS; these interactions inhibit the binding of active AP1 to its target DNA. Interacts with MYOD1. Interacts with HDAC1; this interaction affects HDAC1 activity on MYOG promoter and thus inhibits MYOD1 transcriptional activity.

It localises to the cytoplasm. The protein resides in the nucleus. In terms of biological role, protects T-cells from IL2 deprivation-induced apoptosis through the inhibition of FOXO3A transcriptional activity that leads to the down-regulation of the pro-apoptotic factor BCL2L11. In macrophages, plays a role in the anti-inflammatory and immunosuppressive effects of glucocorticoids and IL10. In T-cells, inhibits anti-CD3-induced NFKB1 nuclear translocation and thereby NFKB1 DNA-binding activities. In vitro, suppresses AP-1 transcription factor complex DNA-binding activities. The chain is TSC22 domain family protein 3 (Tsc22d3) from Rattus norvegicus (Rat).